Here is a 559-residue protein sequence, read N- to C-terminus: MAGIYARSWPSLFRLYMRCAGTRCSGHGWQNALESKGLLYFLPSSYLPIQAHIRLYSSSDQKEDGGSKGTSAASSPEKSMAGLDPSKPEQKSTFPPDPIQVKVKAVLKKREYGTKYMKNNFITGVRALNEFCLKPSDLESLRKIRRRSPHDDTEAFTVYLRSDVEAKAYEVWGSPEAIFRERKMRKEEEIAYRENLFRNQKLLKEYKDFLGNTKPRLSTTNMFMKGPGKVVIVAICINGLNFFFKLLAWVYTGSASMFSEALHSLADTLNQALLALGISQSARTPDPGHPYGFTNMRYIASLISGVGIFMMGAGLSWYHGIIGLLHPQPIESLLWAYCILAGSLVSEGATLLVAINEIRKSSRAKGLSFYQYVMQSRDPSTNVVLMEDAAAVLGLVMAASCMGLTSLTGNPLYDSLGSLGVGTLLGAVSAFLIYTNTEALIGRSIQPDQVQRLTELLESDPAVRAIHDVKATDMGMSKVRFKAEVDFDGRVVTRSYLEKQDIDLVLNEIRQVKTAEDLEAFMLKHGENIIDTLGAEVDRLEKELKQRNPEVRHVDLEIL.

The disordered stretch occupies residues 58-96 (SSDQKEDGGSKGTSAASSPEKSMAGLDPSKPEQKSTFPP). 5 helical membrane passes run 230–250 (VVIV…LAWV), 305–325 (GVGI…IGLL), 333–353 (LLWA…TLLV), 389–409 (AAAV…SLTG), and 415–435 (SLGS…LIYT). The short motif at 453–457 (LTELL) is the LXXLL motif element.

It belongs to the cation diffusion facilitator (CDF) transporter (TC 2.A.4) family. SLC30A subfamily.

It localises to the mitochondrion membrane. Its subcellular location is the nucleus. It is found in the endoplasmic reticulum. It carries out the reaction Zn(2+)(in) + 2 H(+)(out) = Zn(2+)(out) + 2 H(+)(in). In terms of biological role, mitochondrial proton-coupled zinc ion antiporter mediating the export of zinc from the mitochondria and involved in zinc homeostasis, zinc mobilization as well as mitochondrial morphology and health. In nucleus, may function as a secondary coactivator for nuclear receptors. The sequence is that of Proton-coupled zinc antiporter SLC30A9, mitochondrial (slc30a9) from Xenopus laevis (African clawed frog).